Consider the following 92-residue polypeptide: Small ribosomal subunit protein uS19 (92 aa).

Belongs to the universal ribosomal protein uS19 family.

Functionally, protein S19 forms a complex with S13 that binds strongly to the 16S ribosomal RNA. The sequence is that of Small ribosomal subunit protein uS19 from Bifidobacterium animalis subsp. lactis (strain AD011).